The primary structure comprises 638 residues: XK-related protein 6 (638 aa).

2 disordered regions span residues 24–43 (VGSGEEDGEPGGGGCGGGDG) and 82–117 (RSAAAADGGDQPLQPPGAAGRHPPTPSAGRPQPASP). Gly residues predominate over residues 33–43 (PGGGGCGGGDG). 7 helical membrane-spanning segments follow: residues 127–147 (LWIVLALLVFFGDVGTDLWLA), 158–178 (CFGLTLFFVLVPSLLVQSLSF), 315–335 (TLPCVSSVTSLMSLAWVLASY), 369–389 (VISFALFASIFQLYFGIFVVV), 410–430 (WEEILFNMVVGIVYIFCWFNV), 439–459 (MFAYYTIVLTENAALTFLWYF), and 470–490 (AVPALCCVFVSFVAGITLMLL).

The protein belongs to the XK family.

It localises to the cell membrane. The protein is XK-related protein 6 of Mus musculus (Mouse).